The chain runs to 58 residues: Small ribosomal subunit protein bS21 (58 aa).

A compositionally biased stretch (basic and acidic residues) spans 32–42; it reads IRKREHYEKPS. The interval 32-58 is disordered; that stretch reads IRKREHYEKPSVKRKKKSEAARKRKFK. Residues 43 to 58 are compositionally biased toward basic residues; it reads VKRKKKSEAARKRKFK.

This sequence belongs to the bacterial ribosomal protein bS21 family.

The chain is Small ribosomal subunit protein bS21 from Lachnoclostridium phytofermentans (strain ATCC 700394 / DSM 18823 / ISDg) (Clostridium phytofermentans).